The sequence spans 313 residues: D-alanine--D-alanine ligase (313 aa).

One can recognise an ATP-grasp domain in the interval 107-303 (KQAFAAAGLT…FEALVEQIAC (197 aa)). Residue 135–188 (PFGLPVVVKPVQEGSSVGVTIVKKPEDLQAALDEAFRYDTLVLVEKYIKGQEVQ) participates in ATP binding. Residues D256, E269, and N271 each coordinate Mg(2+).

The protein belongs to the D-alanine--D-alanine ligase family. Requires Mg(2+) as cofactor. Mn(2+) is required as a cofactor.

Its subcellular location is the cytoplasm. It carries out the reaction 2 D-alanine + ATP = D-alanyl-D-alanine + ADP + phosphate + H(+). It functions in the pathway cell wall biogenesis; peptidoglycan biosynthesis. Cell wall formation. This chain is D-alanine--D-alanine ligase, found in Trichlorobacter lovleyi (strain ATCC BAA-1151 / DSM 17278 / SZ) (Geobacter lovleyi).